Reading from the N-terminus, the 163-residue chain is Nucleotide-binding protein APL_1231 (163 aa).

It belongs to the YajQ family.

Its function is as follows. Nucleotide-binding protein. The protein is Nucleotide-binding protein APL_1231 of Actinobacillus pleuropneumoniae serotype 5b (strain L20).